The following is a 246-amino-acid chain: Bis(5'-nucleosyl)-tetraphosphatase PrpE [asymmetrical] (246 aa).

This sequence belongs to the PrpE family. It depends on Ni(2+) as a cofactor.

It carries out the reaction P(1),P(4)-bis(5'-guanosyl) tetraphosphate + H2O = GMP + GTP + 2 H(+). Functionally, asymmetrically hydrolyzes Ap4p to yield AMP and ATP. The protein is Bis(5'-nucleosyl)-tetraphosphatase PrpE [asymmetrical] of Bacillus cereus (strain ATCC 14579 / DSM 31 / CCUG 7414 / JCM 2152 / NBRC 15305 / NCIMB 9373 / NCTC 2599 / NRRL B-3711).